Consider the following 211-residue polypeptide: MPAAICPGWAEEKHLWKQGFSSIAGLDEAGRGCLAGPVVAGAVIMPPRLKGDWVAMVRDSKVLTPEKREYLYCHIVSMAISFGVGVVDNTQIDCLGIAPATRLAMKQAVEHLDCRPDFLLVDYLKLPDIPLPQKGIVDGDALCFSIACASIIAKVSRDRLMCELEATYPGYHLAKHKGYGTALHMECISQKGISPIHRRTFAPLKSMFDVI.

The RNase H type-2 domain occupies 21-211; sequence SSIAGLDEAG…APLKSMFDVI (191 aa). 3 residues coordinate a divalent metal cation: D27, E28, and D122.

The protein belongs to the RNase HII family. It depends on Mn(2+) as a cofactor. Mg(2+) is required as a cofactor.

It localises to the cytoplasm. It carries out the reaction Endonucleolytic cleavage to 5'-phosphomonoester.. Functionally, endonuclease that specifically degrades the RNA of RNA-DNA hybrids. This Dehalococcoides mccartyi (strain ATCC BAA-2266 / KCTC 15142 / 195) (Dehalococcoides ethenogenes (strain 195)) protein is Ribonuclease HII.